Consider the following 349-residue polypeptide: Beta-hexosaminidase (349 aa).

Substrate-binding positions include aspartate 64, arginine 72, arginine 138, and 168 to 169 (KH). The Proton donor/acceptor role is filled by histidine 181. Aspartate 252 functions as the Nucleophile in the catalytic mechanism.

Belongs to the glycosyl hydrolase 3 family. NagZ subfamily.

It is found in the cytoplasm. It catalyses the reaction Hydrolysis of terminal non-reducing N-acetyl-D-hexosamine residues in N-acetyl-beta-D-hexosaminides.. The protein operates within cell wall biogenesis; peptidoglycan recycling. Its function is as follows. Plays a role in peptidoglycan recycling by cleaving the terminal beta-1,4-linked N-acetylglucosamine (GlcNAc) from peptide-linked peptidoglycan fragments, giving rise to free GlcNAc, anhydro-N-acetylmuramic acid and anhydro-N-acetylmuramic acid-linked peptides. The sequence is that of Beta-hexosaminidase from Methylobacillus flagellatus (strain ATCC 51484 / DSM 6875 / VKM B-1610 / KT).